The sequence spans 963 residues: Probable sucrose-phosphate synthase 2 (963 aa).

The disordered stretch occupies residues 111-150 (KLRTDTNADMSEDLFEGEKGEDAGDPSVAYGDSTTGSSPK).

This sequence belongs to the glycosyltransferase 1 family. Homodimer or homotetramer. In terms of tissue distribution, expressed in germinating seeds.

It carries out the reaction beta-D-fructose 6-phosphate + UDP-alpha-D-glucose = sucrose 6(F)-phosphate + UDP + H(+). It participates in glycan biosynthesis; sucrose biosynthesis; sucrose from D-fructose 6-phosphate and UDP-alpha-D-glucose: step 1/2. Activity is regulated by phosphorylation and moderated by concentration of metabolites and light. In terms of biological role, plays a role in photosynthetic sucrose synthesis by catalyzing the rate-limiting step of sucrose biosynthesis from UDP-glucose and fructose- 6-phosphate. Involved in the regulation of carbon partitioning in the leaves of plants. May regulate the synthesis of sucrose and therefore play a major role as a limiting factor in the export of photoassimilates out of the leaf. Plays a role for sucrose availability that is essential for plant growth and fiber elongation. The protein is Probable sucrose-phosphate synthase 2 (SPS2) of Oryza sativa subsp. japonica (Rice).